Consider the following 276-residue polypeptide: NADPH-dependent 7-cyano-7-deazaguanine reductase (276 aa).

Position 83 to 85 (isoleucine 83 to serine 85) interacts with substrate. Serine 85–lysine 86 serves as a coordination point for NADPH. Cysteine 184 functions as the Thioimide intermediate in the catalytic mechanism. Aspartate 191 acts as the Proton donor in catalysis. Histidine 223–glutamate 224 is a substrate binding site. An NADPH-binding site is contributed by arginine 252–glycine 253.

It belongs to the GTP cyclohydrolase I family. QueF type 2 subfamily. In terms of assembly, homodimer.

It is found in the cytoplasm. It carries out the reaction 7-aminomethyl-7-carbaguanine + 2 NADP(+) = 7-cyano-7-deazaguanine + 2 NADPH + 3 H(+). It functions in the pathway tRNA modification; tRNA-queuosine biosynthesis. Its function is as follows. Catalyzes the NADPH-dependent reduction of 7-cyano-7-deazaguanine (preQ0) to 7-aminomethyl-7-deazaguanine (preQ1). The chain is NADPH-dependent 7-cyano-7-deazaguanine reductase from Pseudomonas aeruginosa (strain LESB58).